The sequence spans 360 residues: Protein Wnt-2 (360 aa).

Positions 1–25 are cleaved as a signal peptide; it reads MNVPLGGIWLWLPLLLTWLTPEVSS. Disulfide bonds link Cys-76–Cys-87, Cys-127–Cys-135, Cys-137–Cys-157, Cys-206–Cys-220, Cys-208–Cys-215, Cys-278–Cys-309, Cys-294–Cys-304, Cys-308–Cys-348, Cys-324–Cys-339, Cys-326–Cys-336, and Cys-331–Cys-332. Residue Ser-212 is the site of O-palmitoleoyl serine; by PORCN attachment. An N-linked (GlcNAc...) asparagine glycan is attached at Asn-295.

Belongs to the Wnt family. In terms of processing, palmitoleoylation is required for efficient binding to frizzled receptors. Depalmitoleoylation leads to Wnt signaling pathway inhibition. In embryos in the developing allantois, pericardium heart, and ventral-lateral mesoderm; in adults in lung, brain, heart and placenta.

It localises to the secreted. Its subcellular location is the extracellular space. It is found in the extracellular matrix. In terms of biological role, ligand for members of the frizzled family of seven transmembrane receptors. Functions in the canonical Wnt/beta-catenin signaling pathway. Functions as a upstream regulator of FGF10 expression. Plays an important role in embryonic lung development. May contribute to embryonic brain development by regulating the proliferation of dopaminergic precursors and neurons. This is Protein Wnt-2 (Wnt2) from Mus musculus (Mouse).